The primary structure comprises 66 residues: Beta-defensin 134 (66 aa).

The first 19 residues, 1–19 (MKPLLVVFVFLFLWDPVLA), serve as a signal peptide directing secretion. Intrachain disulfides connect C32–C58, C38–C52, and C42–C59.

Belongs to the beta-defensin family.

It is found in the secreted. In terms of biological role, has antibacterial activity. The sequence is that of Beta-defensin 134 (DEFB134) from Homo sapiens (Human).